The chain runs to 281 residues: Pantothenate synthetase (281 aa).

An ATP-binding site is contributed by 30–37 (MGNLHQGH). The active-site Proton donor is H37. Residue Q61 participates in (R)-pantoate binding. Q61 provides a ligand contact to beta-alanine. 149–152 (GNKD) contributes to the ATP binding site. Q155 contributes to the (R)-pantoate binding site. ATP is bound by residues I178 and 186–189 (MSSR).

It belongs to the pantothenate synthetase family. As to quaternary structure, homodimer.

The protein localises to the cytoplasm. The enzyme catalyses (R)-pantoate + beta-alanine + ATP = (R)-pantothenate + AMP + diphosphate + H(+). It functions in the pathway cofactor biosynthesis; (R)-pantothenate biosynthesis; (R)-pantothenate from (R)-pantoate and beta-alanine: step 1/1. In terms of biological role, catalyzes the condensation of pantoate with beta-alanine in an ATP-dependent reaction via a pantoyl-adenylate intermediate. In Shewanella sp. (strain ANA-3), this protein is Pantothenate synthetase.